The primary structure comprises 481 residues: Glutamyl-tRNA(Gln) amidotransferase subunit A (481 aa).

Catalysis depends on charge relay system residues K76 and S151. The Acyl-ester intermediate role is filled by S175.

This sequence belongs to the amidase family. GatA subfamily. Heterotrimer of A, B and C subunits.

It carries out the reaction L-glutamyl-tRNA(Gln) + L-glutamine + ATP + H2O = L-glutaminyl-tRNA(Gln) + L-glutamate + ADP + phosphate + H(+). Allows the formation of correctly charged Gln-tRNA(Gln) through the transamidation of misacylated Glu-tRNA(Gln) in organisms which lack glutaminyl-tRNA synthetase. The reaction takes place in the presence of glutamine and ATP through an activated gamma-phospho-Glu-tRNA(Gln). The chain is Glutamyl-tRNA(Gln) amidotransferase subunit A from Chlorobaculum tepidum (strain ATCC 49652 / DSM 12025 / NBRC 103806 / TLS) (Chlorobium tepidum).